We begin with the raw amino-acid sequence, 2210 residues long: Orsellinic acid synthase ArmB (2210 aa).

The N-terminal acylcarrier protein transacylase domain (SAT) stretch occupies residues 38–261 (LLLDACHYAF…HKTTVDALYH (224 aa)). A Ketosynthase family 3 (KS3) domain is found at 391 to 817 (QEPIAICGMS…GSNGALLLEE (427 aa)). Catalysis depends on for beta-ketoacyl synthase activity residues cysteine 561, histidine 696, and histidine 736. The malonyl-CoA:ACP transacylase (MAT) domain stretch occupies residues 915–1240 (VFVFSGQGGQ…GLTLSSSLSQ (326 aa)). Serine 1009 (for acyl/malonyl transferase activity) is an active-site residue. The interval 1307-1437 (MLQSWAQFPS…GQFRPLLVVD (131 aa)) is N-terminal hotdog fold. The PKS/mFAS DH domain maps to 1307-1614 (MLQSWAQFPS…FKKLRLNTLQ (308 aa)). A product template (PT) domain region spans residues 1336-1611 (ITGHIVGDVP…GMCFKKLRLN (276 aa)). The Proton acceptor; for dehydratase activity role is filled by histidine 1339. The tract at residues 1464–1614 (AEVFTTRTAY…FKKLRLNTLQ (151 aa)) is C-terminal hotdog fold. The active-site Proton donor; for dehydratase activity is the aspartate 1525. In terms of domain architecture, Carrier 1 spans 1660-1735 (VDVQNTVLNI…ELVREISSTV (76 aa)). The residue at position 1694 (serine 1694) is an O-(pantetheine 4'-phosphoryl)serine. The segment at 1739-1761 (AATAVNTPETASTPEPTLQGDAS) is disordered. The 78-residue stretch at 1845–1922 (SSPSSDLVDT…AVNQYISSKR (78 aa)) folds into the Carrier 2 domain. Residue serine 1882 is modified to O-(pantetheine 4'-phosphoryl)serine. Residues 1920 to 1946 (SKRPGKSPKQVEETAMDPDREEDLSDL) form a disordered region. The segment covering 1933–1944 (TAMDPDREEDLS) has biased composition (acidic residues). Positions 1963-2202 (VPMSVQKSSS…LGAVTQALVD (240 aa)) are thioesterase (TE) domain.

It functions in the pathway secondary metabolite biosynthesis. In terms of biological role, non-reducing polyketide synthase, part of the gene cluster that mediates the biosynthesis of melleolides, a range of antifungal and phytotoxic polyketide derivatives composed of an orsellinic acid (OA) moiety esterified to various sesquiterpene alcohols. The first step in melleolides biosynthesis is performed by the delta(6)-protoilludene synthase PRO1 which catalyzes the cyclization of farnesyl diphosphate to protoilludene. The orsellinic acid synthase armB produces OA by condensing acetyl-CoA with 3 malonyl-CoA units in a three-round chain elongation reaction folowed by a C2-C7 ring closure. ArmB further catalyzes the trans-esterification of OA to the various sesquiterpene alcohols resulting from the hydroxylation of protoilludene. The melleolides cluster also includes 5 cytochrome P450 monooxygenases, 4 NAD(+)-dependent oxidoreductases, one flavin-dependent oxidoreductase, and one O-methyltransferase. The cytochrome P450 monooxygenases may be involved in protoilludene hydroxylation to elaborate melleolides with multiple alcohol groups, such as melleolide D, which carries alcohol functionalities at C-4, C-5, C-10, and C-13. The role of the NAD(+)-dependent enzymes remains unknown. Numerous melleolides, including arnamial, show 5'-O-methylation of the aromatic moiety which may be catalyzed by the methyltransferase encoded in the cluster. The flavin-dependent oxidoreductase might represent the dehydrogenase yielding the aldehyde in position 1 of arnamial and other melleolides. Finally, several halogenase localized outside of the cluster (armH1 to armH5), are able to catalyze the transfer of a single chlorine atom to the melleolide backbone, resulting in a 6'-chloromelleolide product. The chain is Orsellinic acid synthase ArmB from Armillaria ostoyae (Armillaria root rot fungus).